Here is a 353-residue protein sequence, read N- to C-terminus: MIETDAVVIGAGPVGLFQAFQLGLQGIGAHLIDALPQAGGQCVTLYGDKPIYDIAGIPVCTGRELIDRLLAQLAPFKPHWHLNTLVAALAPQPDARLLLETDTGARLLARSVFIAAGVGAFVPRTLKMAGMERFVGTQLFYQVLPAGMDVTGRQVIVHGGDEGAVACAVELAEQGRAARVSLLYRRDLFQAPEALLQRLQRLRAAGRIAVEVGQITGIASSGMPQCSTLRALQVVDAQGASHALPVDVLVAVLGISPRLGPLTDWGMAMARKQLQVDTEAFRTSVPGIYAVGDINTYPGKRRLILCGFHEATLAAFAAAEALKGDKVALQYTTTSAHLHRLLGVAPASGATGP.

FAD is bound by residues D33, Q41, Y46, V86, F121, D293, and T333.

It belongs to the ferredoxin--NADP reductase type 2 family. As to quaternary structure, homodimer. FAD serves as cofactor.

It carries out the reaction 2 reduced [2Fe-2S]-[ferredoxin] + NADP(+) + H(+) = 2 oxidized [2Fe-2S]-[ferredoxin] + NADPH. The protein is Ferredoxin--NADP reductase of Verminephrobacter eiseniae (strain EF01-2).